The following is a 334-amino-acid chain: Glyceraldehyde-3-phosphate dehydrogenase 2 (334 aa).

Residues 12–13 (RI), D35, and R79 each bind NAD(+). D-glyceraldehyde 3-phosphate contacts are provided by residues 152–154 (SCT), T183, R198, 211–212 (SG), and R234. C153 functions as the Nucleophile in the catalytic mechanism. Residue N315 participates in NAD(+) binding.

The protein belongs to the glyceraldehyde-3-phosphate dehydrogenase family. Homotetramer.

The protein resides in the cytoplasm. It carries out the reaction D-glyceraldehyde 3-phosphate + phosphate + NAD(+) = (2R)-3-phospho-glyceroyl phosphate + NADH + H(+). The protein operates within carbohydrate degradation; glycolysis; pyruvate from D-glyceraldehyde 3-phosphate: step 1/5. Its activity is regulated as follows. Inhibited by pentalenolactone (PL). In terms of biological role, catalyzes the oxidative phosphorylation of glyceraldehyde 3-phosphate (G3P) to 1,3-bisphosphoglycerate (BPG) using the cofactor NAD. The first reaction step involves the formation of a hemiacetal intermediate between G3P and a cysteine residue, and this hemiacetal intermediate is then oxidized to a thioester, with concomitant reduction of NAD to NADH. The reduced NADH is then exchanged with the second NAD, and the thioester is attacked by a nucleophilic inorganic phosphate to produce BPG. This Streptomyces arenae protein is Glyceraldehyde-3-phosphate dehydrogenase 2 (gap2).